A 716-amino-acid polypeptide reads, in one-letter code: Putative mannosyltransferase YkcB (716 aa).

8 helical membrane-spanning segments follow: residues Leu8 to Trp28, Met44 to Val64, Ser87 to Ile107, Ile118 to Thr135, Asn137 to Ile157, Lys159 to Lys179, Met180 to Ala200, and Ile206 to Ile226. The disordered stretch occupies residues Thr260–Pro363. The span at Glu278–Pro289 shows a compositional bias: polar residues. Over residues Asn290–Asn307 the composition is skewed to low complexity. Residues Pro318–Thr347 are compositionally biased toward gly residues. A run of 6 helical transmembrane segments spans residues Gln376–Ala396, Thr409–Phe429, Tyr433–Val453, Trp462–Leu482, Val491–Phe511, and Phe518–Ala538. Positions Val664 to Glu716 are disordered. Positions Thr680–Asn694 are enriched in low complexity.

Belongs to the glycosyltransferase 39 family.

The protein resides in the cell membrane. This Bacillus subtilis (strain 168) protein is Putative mannosyltransferase YkcB (ykcB).